Reading from the N-terminus, the 403-residue chain is Solanesyl-diphosphate synthase 2, chloroplastic (403 aa).

Residues 1–62 (MLSVSCPRVY…QPGLAAVDVP (62 aa)) constitute a chloroplast transit peptide. Residues Lys123, Arg126, and His161 each contribute to the isopentenyl diphosphate site. Mg(2+) is bound by residues Asp168 and Asp172. Arg177 is an an all-trans-polyprenyl diphosphate binding site. Residue Arg178 participates in isopentenyl diphosphate binding. Residues Lys254, Thr255, Gln292, and Lys309 each contribute to the an all-trans-polyprenyl diphosphate site.

Belongs to the FPP/GGPP synthase family. Homodimer. Interacts with FBN5. The cofactor is Mg(2+). As to expression, expressed in leaves, stems and roots. Highest expression in leaves and roots.

The protein resides in the plastid. Its subcellular location is the chloroplast. It catalyses the reaction 7 isopentenyl diphosphate + (2E)-geranyl diphosphate = all-trans-nonaprenyl diphosphate + 7 diphosphate. Involved in providing solanesyl diphosphate for plastoquinone-9 (PQ-9) formation. Geranyl diphosphate is the preferred substrate. This chain is Solanesyl-diphosphate synthase 2, chloroplastic, found in Oryza sativa subsp. japonica (Rice).